We begin with the raw amino-acid sequence, 687 residues long: RNA-binding protein VTS1 (687 aa).

Residues 1–10 show a composition bias toward basic residues; sequence MASHTLRPHR. Disordered stretches follow at residues 1-115, 248-341, and 526-598; these read MASH…TPEA, AAAK…PGIG, and SPFN…AGVA. Polar residues predominate over residues 29–41; sequence TRQSLGPPTSGNS. The segment covering 52-68 has biased composition (low complexity); the sequence is GLASPSSPSQPRHVSSS. The span at 287–301 shows a compositional bias: polar residues; the sequence is GLESNMSGRSRSKSP. Positions 305–324 are enriched in basic and acidic residues; the sequence is PRPKSTDFSGKPRESLRRES. The segment covering 526–539 has biased composition (polar residues); it reads SPFNASAPSLQPGL. Low complexity predominate over residues 550–566; it reads QSSHLNQHYNQHQQQHQ. Gly residues predominate over residues 585–597; the sequence is QTGGGGAGGGAGV. The SAM domain maps to 606–667; the sequence is KVLEDVPNWL…LKVFYNVRTK (62 aa).

Belongs to the VTS1 family. Monomer. Binds to RNA.

The protein localises to the cytoplasm. The protein resides in the cytosol. Its subcellular location is the P-body. Functionally, RNA-binding protein involved in post-transcriptional regulation through transcript degradation. This Cryptococcus neoformans var. grubii serotype A (strain H99 / ATCC 208821 / CBS 10515 / FGSC 9487) (Filobasidiella neoformans var. grubii) protein is RNA-binding protein VTS1.